Reading from the N-terminus, the 188-residue chain is dITP/XTP pyrophosphatase (188 aa).

Residue 10–15 (TSNPHK) coordinates substrate. 2 residues coordinate Mg(2+): E39 and D69. The Proton acceptor role is filled by D69. Substrate contacts are provided by residues S70, 145 to 148 (FGFD), K168, and 173 to 174 (HR).

The protein belongs to the HAM1 NTPase family. Homodimer. It depends on Mg(2+) as a cofactor.

The enzyme catalyses XTP + H2O = XMP + diphosphate + H(+). It catalyses the reaction dITP + H2O = dIMP + diphosphate + H(+). The catalysed reaction is ITP + H2O = IMP + diphosphate + H(+). Pyrophosphatase that catalyzes the hydrolysis of nucleoside triphosphates to their monophosphate derivatives, with a high preference for the non-canonical purine nucleotides XTP (xanthosine triphosphate), dITP (deoxyinosine triphosphate) and ITP. Seems to function as a house-cleaning enzyme that removes non-canonical purine nucleotides from the nucleotide pool, thus preventing their incorporation into DNA/RNA and avoiding chromosomal lesions. The polypeptide is dITP/XTP pyrophosphatase (Ignicoccus hospitalis (strain KIN4/I / DSM 18386 / JCM 14125)).